A 329-amino-acid chain; its full sequence is NADH-quinone oxidoreductase subunit H (329 aa).

The next 9 membrane-spanning stretches (helical) occupy residues 9–29, 42–62, 75–95, 117–137, 154–174, 188–208, 238–258, 260–280, and 309–329; these read LIKI…ATYI, GPCY…IKLF, FIFT…MAPI, IGFL…ILAG, IQLL…LMVV, GGFL…FLIA, LKWG…SFVI, IVFF…AILI, and WKIM…IILI.

It belongs to the complex I subunit 1 family. As to quaternary structure, NDH-1 is composed of 14 different subunits. Subunits NuoA, H, J, K, L, M, N constitute the membrane sector of the complex.

The protein localises to the cell inner membrane. The enzyme catalyses a quinone + NADH + 5 H(+)(in) = a quinol + NAD(+) + 4 H(+)(out). NDH-1 shuttles electrons from NADH, via FMN and iron-sulfur (Fe-S) centers, to quinones in the respiratory chain. The immediate electron acceptor for the enzyme in this species is believed to be ubiquinone. Couples the redox reaction to proton translocation (for every two electrons transferred, four hydrogen ions are translocated across the cytoplasmic membrane), and thus conserves the redox energy in a proton gradient. This subunit may bind ubiquinone. This chain is NADH-quinone oxidoreductase subunit H, found in Helicobacter pylori (strain G27).